The primary structure comprises 95 residues: Co-chaperonin GroES (95 aa).

This sequence belongs to the GroES chaperonin family. Heptamer of 7 subunits arranged in a ring. Interacts with the chaperonin GroEL.

The protein resides in the cytoplasm. In terms of biological role, together with the chaperonin GroEL, plays an essential role in assisting protein folding. The GroEL-GroES system forms a nano-cage that allows encapsulation of the non-native substrate proteins and provides a physical environment optimized to promote and accelerate protein folding. GroES binds to the apical surface of the GroEL ring, thereby capping the opening of the GroEL channel. This is Co-chaperonin GroES from Chlorobium limicola (strain DSM 245 / NBRC 103803 / 6330).